We begin with the raw amino-acid sequence, 195 residues long: O-methyltransferase (195 aa).

The protein belongs to the methyltransferase superfamily.

Its pathway is secondary metabolite biosynthesis. Its function is as follows. O-methyltransferase; part of the gene cluster that mediates the biosynthesis of pyrophen and campyrone B, which represent a class of fungal amino acid-derived alpha-pyrone natural products. The first step of pyrophen biosynthesis is catalyzed by the PKS-NRPS hybrid synthetase ATPKS that uptakes and condensates L-phenylalanine and malonyl-CoA in order to produce desmethyldesacetylpyrophen. Although the A domain does not discriminate between 2 enantiomeric phenylalanines, the downstream KS domain must play a gate keeping role to stereoselectively accept the L-phenylalanyl-S-phosphopantetheine (Ppant)-T domain intermediate for chain elongation. The resulting amino acid derived diketide is off-loaded through lactonization to yield the alpha-pyrone intermediate desmethyldesacetylpyrophen. The cluster-specific O-methyltransferase (OMT) then methylates desmethyldesacetylpyrophen to desacetylpyrophen, which is further acetylated to pyrophen by an endogenous yet unidentified N-acetyltransferase. ATPKS has relaxed substrate specificity to activate and extend branched-chain amino acid L-leucine to produce small amounts of campyrone B. The polypeptide is O-methyltransferase (Aspergillus niger (strain ATCC 1015 / CBS 113.46 / FGSC A1144 / LSHB Ac4 / NCTC 3858a / NRRL 328 / USDA 3528.7)).